The chain runs to 275 residues: Small ribosomal subunit protein uS2 (275 aa).

The tract at residues 244 to 275 (REGAEASKKKATVKKKAAPRAASGESAEAAAE) is disordered. Residues 252-261 (KKATVKKKAA) are compositionally biased toward basic residues. Over residues 262–275 (PRAASGESAEAAAE) the composition is skewed to low complexity.

The protein belongs to the universal ribosomal protein uS2 family.

The protein is Small ribosomal subunit protein uS2 of Thioalkalivibrio sulfidiphilus (strain HL-EbGR7).